A 438-amino-acid polypeptide reads, in one-letter code: Ribosomal protein uS12 methylthiotransferase RimO (438 aa).

One can recognise an MTTase N-terminal domain in the interval 4–120 (HSLFLLSLGC…ILASLGARYR (117 aa)). Positions 13, 49, 83, 144, 148, and 151 each coordinate [4Fe-4S] cluster. Residues 130–359 (LTPSHYAYLK…MELQEAVAES (230 aa)) form the Radical SAM core domain. Positions 362–429 (REFEGKEIEV…AHELYGEIVQ (68 aa)) constitute a TRAM domain.

The protein belongs to the methylthiotransferase family. RimO subfamily. [4Fe-4S] cluster serves as cofactor.

The protein localises to the cytoplasm. It catalyses the reaction L-aspartate(89)-[ribosomal protein uS12]-hydrogen + (sulfur carrier)-SH + AH2 + 2 S-adenosyl-L-methionine = 3-methylsulfanyl-L-aspartate(89)-[ribosomal protein uS12]-hydrogen + (sulfur carrier)-H + 5'-deoxyadenosine + L-methionine + A + S-adenosyl-L-homocysteine + 2 H(+). Its function is as follows. Catalyzes the methylthiolation of an aspartic acid residue of ribosomal protein uS12. The sequence is that of Ribosomal protein uS12 methylthiotransferase RimO from Chlorobium chlorochromatii (strain CaD3).